We begin with the raw amino-acid sequence, 377 residues long: Homoserine O-succinyltransferase (377 aa).

An AB hydrolase-1 domain is found at asparagine 50 to methionine 359. Residue serine 156 is the Nucleophile of the active site. Arginine 226 provides a ligand contact to substrate. Catalysis depends on residues aspartate 321 and histidine 354. Aspartate 355 is a binding site for substrate.

Belongs to the AB hydrolase superfamily. MetX family. Homodimer.

It is found in the cytoplasm. The enzyme catalyses L-homoserine + succinyl-CoA = O-succinyl-L-homoserine + CoA. Its pathway is amino-acid biosynthesis; L-methionine biosynthesis via de novo pathway; O-succinyl-L-homoserine from L-homoserine: step 1/1. Functionally, transfers a succinyl group from succinyl-CoA to L-homoserine, forming succinyl-L-homoserine. The polypeptide is Homoserine O-succinyltransferase (Nitrosospira multiformis (strain ATCC 25196 / NCIMB 11849 / C 71)).